Consider the following 491-residue polypeptide: Lysine--tRNA ligase (491 aa).

Mg(2+)-binding residues include Glu-398 and Glu-405.

This sequence belongs to the class-II aminoacyl-tRNA synthetase family. Homodimer. Requires Mg(2+) as cofactor.

The protein resides in the cytoplasm. It carries out the reaction tRNA(Lys) + L-lysine + ATP = L-lysyl-tRNA(Lys) + AMP + diphosphate. The polypeptide is Lysine--tRNA ligase (Mycoplasmopsis synoviae (strain 53) (Mycoplasma synoviae)).